We begin with the raw amino-acid sequence, 150 residues long: 6,7-dimethyl-8-ribityllumazine synthase (150 aa).

5-amino-6-(D-ribitylamino)uracil is bound by residues Phe11, 43-45 (VYD), and 67-69 (AVI). 72–73 (AT) contributes to the (2S)-2-hydroxy-3-oxobutyl phosphate binding site. The active-site Proton donor is His75. Leu100 serves as a coordination point for 5-amino-6-(D-ribitylamino)uracil. Residue Arg115 coordinates (2S)-2-hydroxy-3-oxobutyl phosphate.

The protein belongs to the DMRL synthase family.

It carries out the reaction (2S)-2-hydroxy-3-oxobutyl phosphate + 5-amino-6-(D-ribitylamino)uracil = 6,7-dimethyl-8-(1-D-ribityl)lumazine + phosphate + 2 H2O + H(+). It functions in the pathway cofactor biosynthesis; riboflavin biosynthesis; riboflavin from 2-hydroxy-3-oxobutyl phosphate and 5-amino-6-(D-ribitylamino)uracil: step 1/2. In terms of biological role, catalyzes the formation of 6,7-dimethyl-8-ribityllumazine by condensation of 5-amino-6-(D-ribitylamino)uracil with 3,4-dihydroxy-2-butanone 4-phosphate. This is the penultimate step in the biosynthesis of riboflavin. The sequence is that of 6,7-dimethyl-8-ribityllumazine synthase from Pyrobaculum aerophilum (strain ATCC 51768 / DSM 7523 / JCM 9630 / CIP 104966 / NBRC 100827 / IM2).